The sequence spans 85 residues: N.vectensis toxin 1 5 (85 aa).

A signal peptide spans 1-20; that stretch reads MASFKIVIVCLALLVAVACA. The propeptide occupies 21-36; it reads RRRDMMSDDELDFHLS. 3 disulfides stabilise this stretch: C42-C82, C44-C72, and C65-C83.

The protein belongs to the sea anemone sodium channel inhibitory toxin family. Type II subfamily. As to expression, expressed in ectodermal glands and in clumps outside of the extodermal layer. Is not expressed in nematocytes. In adult female tissues, shows similar expression levels in mesenteries (gametes-producing tissue), tentacles, pharynx and physa.

Its subcellular location is the secreted. In terms of biological role, binds to site 3 of voltage-gated sodium channels and inhibits the inactivation process. Is highly active on DmNav1/TipE (drosophila) and is only extremely weakly active on rat Nav1.4-beta-1/SCN4A-SCN1B, and on human Nav1.5-beta-1/SCN5A-beta-1. This reveals high specificity for arthropod over mammalian channels. In vivo, when released into the medium, this recombinant toxin induces impaired swimming, paralysis and death of the crustacean A.nauplii within several hours. Also causes paralysis of cherry shrimps immediately after injection at very low doses. Its effect on zebrafish (D.rerio) larvae is also rapid, since it induces tail twitching accompanied by impaired swimming after 20 minutes and complete paralysis within 45 minutes. It has also been observed to cause death of zebrafish larvae within 1 hour. The chain is N.vectensis toxin 1 5 from Nematostella vectensis (Starlet sea anemone).